The sequence spans 261 residues: Cytochrome c oxidase subunit 3 (261 aa).

Residues 1–15 (MTHQTHAYHMVNPSP) are Mitochondrial matrix-facing. A helical membrane pass occupies residues 16-34 (WPLTGALSALLMTSGLIMW). The Mitochondrial intermembrane portion of the chain corresponds to 35-40 (FHFNSM). The chain crosses the membrane as a helical span at residues 41 to 66 (YLLMLGLTTNTLTMYQWWRDIVREST). The Mitochondrial matrix portion of the chain corresponds to 67–72 (FQGHHT). A helical membrane pass occupies residues 73 to 105 (PIVQKGLRYGMILFIVSEVFFFAGFFWAFYHSS). Residues 106–128 (LAPTPELGGCWPPTGITPLNPME) are Mitochondrial intermembrane-facing. Residues 129–152 (VPLLNTSVLLASGVSITWAHHSLM) form a helical membrane-spanning segment. The Mitochondrial matrix portion of the chain corresponds to 153-155 (EGN). A helical membrane pass occupies residues 156 to 183 (RKHMLQALFITISLGIYFTLLQASEYYE). The Mitochondrial intermembrane segment spans residues 184-190 (TPFTISD). The chain crosses the membrane as a helical span at residues 191-223 (GIYGSTFFMATGFHGLHVIIGSTFLIVCFVRQL). At 224-232 (KFHFTSNHH) the chain is on the mitochondrial matrix side. Residues 233–256 (FGFEAAAWYWHFVDVVWLFLYVSI) form a helical membrane-spanning segment. Over 257-261 (YWWGS) the chain is Mitochondrial intermembrane.

It belongs to the cytochrome c oxidase subunit 3 family. In terms of assembly, component of the cytochrome c oxidase (complex IV, CIV), a multisubunit enzyme composed of 14 subunits. The complex is composed of a catalytic core of 3 subunits MT-CO1, MT-CO2 and MT-CO3, encoded in the mitochondrial DNA, and 11 supernumerary subunits COX4I, COX5A, COX5B, COX6A, COX6B, COX6C, COX7A, COX7B, COX7C, COX8 and NDUFA4, which are encoded in the nuclear genome. The complex exists as a monomer or a dimer and forms supercomplexes (SCs) in the inner mitochondrial membrane with NADH-ubiquinone oxidoreductase (complex I, CI) and ubiquinol-cytochrome c oxidoreductase (cytochrome b-c1 complex, complex III, CIII), resulting in different assemblies (supercomplex SCI(1)III(2)IV(1) and megacomplex MCI(2)III(2)IV(2)).

The protein localises to the mitochondrion inner membrane. It carries out the reaction 4 Fe(II)-[cytochrome c] + O2 + 8 H(+)(in) = 4 Fe(III)-[cytochrome c] + 2 H2O + 4 H(+)(out). Functionally, component of the cytochrome c oxidase, the last enzyme in the mitochondrial electron transport chain which drives oxidative phosphorylation. The respiratory chain contains 3 multisubunit complexes succinate dehydrogenase (complex II, CII), ubiquinol-cytochrome c oxidoreductase (cytochrome b-c1 complex, complex III, CIII) and cytochrome c oxidase (complex IV, CIV), that cooperate to transfer electrons derived from NADH and succinate to molecular oxygen, creating an electrochemical gradient over the inner membrane that drives transmembrane transport and the ATP synthase. Cytochrome c oxidase is the component of the respiratory chain that catalyzes the reduction of oxygen to water. Electrons originating from reduced cytochrome c in the intermembrane space (IMS) are transferred via the dinuclear copper A center (CU(A)) of subunit 2 and heme A of subunit 1 to the active site in subunit 1, a binuclear center (BNC) formed by heme A3 and copper B (CU(B)). The BNC reduces molecular oxygen to 2 water molecules using 4 electrons from cytochrome c in the IMS and 4 protons from the mitochondrial matrix. The protein is Cytochrome c oxidase subunit 3 (MT-CO3) of Phoca vitulina (Harbor seal).